A 204-amino-acid chain; its full sequence is MPIGVPKVPFRNPGEEDAVWVDVYNRLHRERLLFLGQEVDSEISNQIVGLMVYLSIEDDTRDLYLFINSPGGWVIPGIAIYDTMQFVLPDVHTICMGLAASMGSFILVGGEITKRLAFPHARVMIHQPASSFYEAQARDFILEAEELLKLRETLTKVYVQRTGNPLWVISEDMERDVFMSATEAQAHGIVDLVAIENENTGNSI.

Serine 101 functions as the Nucleophile in the catalytic mechanism. The active site involves histidine 126.

This sequence belongs to the peptidase S14 family. In terms of assembly, component of the chloroplastic Clp protease core complex.

It localises to the plastid. The protein localises to the chloroplast stroma. It carries out the reaction Hydrolysis of proteins to small peptides in the presence of ATP and magnesium. alpha-casein is the usual test substrate. In the absence of ATP, only oligopeptides shorter than five residues are hydrolyzed (such as succinyl-Leu-Tyr-|-NHMec, and Leu-Tyr-Leu-|-Tyr-Trp, in which cleavage of the -Tyr-|-Leu- and -Tyr-|-Trp bonds also occurs).. Cleaves peptides in various proteins in a process that requires ATP hydrolysis. Has a chymotrypsin-like activity. Plays a major role in the degradation of misfolded proteins. The chain is ATP-dependent Clp protease proteolytic subunit from Phalaenopsis aphrodite subsp. formosana (Moth orchid).